The chain runs to 141 residues: Large ribosomal subunit protein uL11 (141 aa).

It belongs to the universal ribosomal protein uL11 family. Part of the ribosomal stalk of the 50S ribosomal subunit. Interacts with L10 and the large rRNA to form the base of the stalk. L10 forms an elongated spine to which L12 dimers bind in a sequential fashion forming a multimeric L10(L12)X complex. In terms of processing, one or more lysine residues are methylated.

Its function is as follows. Forms part of the ribosomal stalk which helps the ribosome interact with GTP-bound translation factors. The sequence is that of Large ribosomal subunit protein uL11 from Ruegeria sp. (strain TM1040) (Silicibacter sp.).